Reading from the N-terminus, the 162-residue chain is Ribose-5-phosphate isomerase B (162 aa).

D-ribulose 5-phosphate contacts are provided by residues 11 to 12 and 70 to 74; these read DH and GSGNG. E75 acts as the Proton acceptor in catalysis. H102 acts as the Proton donor in catalysis. The D-ribulose 5-phosphate site is built by N103, R113, R137, and R141.

It belongs to the LacAB/RpiB family. As to quaternary structure, homodimer.

The enzyme catalyses aldehydo-D-ribose 5-phosphate = D-ribulose 5-phosphate. The protein operates within carbohydrate degradation; pentose phosphate pathway; D-ribose 5-phosphate from D-ribulose 5-phosphate (non-oxidative stage): step 1/1. Functionally, catalyzes the interconversion of ribulose-5-P and ribose-5-P. This Mycobacterium leprae (strain TN) protein is Ribose-5-phosphate isomerase B.